A 197-amino-acid polypeptide reads, in one-letter code: Nucleoid occlusion factor SlmA (197 aa).

The region spanning 7–67 is the HTH tetR-type domain; it reads INRREHILQC…GLIEFIEESL (61 aa). The H-T-H motif DNA-binding region spans 30–49; it reads TTAKLAAEVGVSEAALYRHF. The stretch at 109–136 forms a coiled coil; the sequence is DALLGENERLRSRISQLFSKIETHLKQI.

Belongs to the nucleoid occlusion factor SlmA family. Homodimer. Interacts with FtsZ.

It is found in the cytoplasm. Its subcellular location is the nucleoid. Its function is as follows. Required for nucleoid occlusion (NO) phenomenon, which prevents Z-ring formation and cell division over the nucleoid. Acts as a DNA-associated cell division inhibitor that binds simultaneously chromosomal DNA and FtsZ, and disrupts the assembly of FtsZ polymers. SlmA-DNA-binding sequences (SBS) are dispersed on non-Ter regions of the chromosome, preventing FtsZ polymerization at these regions. This Shewanella pealeana (strain ATCC 700345 / ANG-SQ1) protein is Nucleoid occlusion factor SlmA.